Reading from the N-terminus, the 661-residue chain is Junctophilin-1 (661 aa).

The Cytoplasmic portion of the chain corresponds to 1–639 (MTGGRFDFDD…EKEANSGPNS (639 aa)). MORN repeat units lie at residues 14–36 (YCGG…KGQG), 38–59 (YSGS…SGNT), 60–82 (YQGY…KWMY), 106–128 (YEGT…DGGT), and 129–151 (YQGQ…PYGM). Ser-157, Ser-216, and Ser-220 each carry phosphoserine. The tract at residues 228-247 (SKSSISSKRSSVRSDAAMSR) is disordered. MORN repeat units follow at residues 281–303 (YMGE…NGMK) and 304–326 (YEGE…DGSK). A compositionally biased stretch (basic and acidic residues) spans 433–454 (DAKENPEEKVPEKPPTPKESPH). The interval 433-631 (DAKENPEEKV…SNDSCPALEK (199 aa)) is disordered. Residue Thr-448 is modified to Phosphothreonine. Phosphoserine is present on Ser-452. Thr-461 carries the phosphothreonine modification. Phosphoserine occurs at positions 465, 469, and 475. The span at 599–613 (VAKESKAEPKAKKSE) shows a compositional bias: basic and acidic residues. A helical; Anchor for type IV membrane protein transmembrane segment spans residues 640 to 660 (IMIVLVMLLNIGLAILFVHFL).

This sequence belongs to the junctophilin family. In terms of tissue distribution, abundantly expressed in skeletal muscle. Very low levels in heart.

It localises to the cell membrane. Its subcellular location is the endoplasmic reticulum membrane. The protein resides in the sarcoplasmic reticulum membrane. Its function is as follows. Junctophilins contribute to the formation of junctional membrane complexes (JMCs) which link the plasma membrane with the endoplasmic or sarcoplasmic reticulum in excitable cells. Provides a structural foundation for functional cross-talk between the cell surface and intracellular calcium release channels. JPH1 contributes to the construction of the skeletal muscle triad by linking the t-tubule (transverse-tubule) and SR (sarcoplasmic reticulum) membranes. The sequence is that of Junctophilin-1 (JPH1) from Homo sapiens (Human).